The following is a 306-amino-acid chain: Agmatinase (306 aa).

Histidine 126, aspartate 149, histidine 151, aspartate 153, aspartate 230, and aspartate 232 together coordinate Mn(2+).

Belongs to the arginase family. Agmatinase subfamily. Mn(2+) is required as a cofactor.

The catalysed reaction is agmatine + H2O = urea + putrescine. It participates in amine and polyamine biosynthesis; putrescine biosynthesis via agmatine pathway; putrescine from agmatine: step 1/1. Functionally, catalyzes the formation of putrescine from agmatine. This Escherichia coli O7:K1 (strain IAI39 / ExPEC) protein is Agmatinase.